Consider the following 502-residue polypeptide: Ribose import ATP-binding protein RbsA (502 aa).

ABC transporter domains lie at 6 to 242 (IDMT…IARD) and 253 to 496 (ALGA…SGAR). Position 38–45 (38–45 (GQNGAGKS)) interacts with ATP.

The protein belongs to the ABC transporter superfamily. Ribose importer (TC 3.A.1.2.1) family. In terms of assembly, the complex is composed of an ATP-binding protein (RbsA), two transmembrane proteins (RbsC) and a solute-binding protein (RbsB).

The protein resides in the cell inner membrane. It carries out the reaction D-ribose(out) + ATP + H2O = D-ribose(in) + ADP + phosphate + H(+). In terms of biological role, part of the ABC transporter complex RbsABC involved in ribose import. Responsible for energy coupling to the transport system. The chain is Ribose import ATP-binding protein RbsA from Cereibacter sphaeroides (strain ATCC 17023 / DSM 158 / JCM 6121 / CCUG 31486 / LMG 2827 / NBRC 12203 / NCIMB 8253 / ATH 2.4.1.) (Rhodobacter sphaeroides).